Reading from the N-terminus, the 126-residue chain is Aspartate 1-decarboxylase 1 (126 aa).

The active-site Schiff-base intermediate with substrate; via pyruvic acid is the Ser-25. Ser-25 carries the post-translational modification Pyruvic acid (Ser). Thr-57 is a binding site for substrate. Tyr-58 functions as the Proton donor in the catalytic mechanism. A substrate-binding site is contributed by 73–75 (GSA).

It belongs to the PanD family. In terms of assembly, heterooctamer of four alpha and four beta subunits. The cofactor is pyruvate. Is synthesized initially as an inactive proenzyme, which is activated by self-cleavage at a specific serine bond to produce a beta-subunit with a hydroxyl group at its C-terminus and an alpha-subunit with a pyruvoyl group at its N-terminus.

It localises to the cytoplasm. The enzyme catalyses L-aspartate + H(+) = beta-alanine + CO2. It participates in cofactor biosynthesis; (R)-pantothenate biosynthesis; beta-alanine from L-aspartate: step 1/1. In terms of biological role, catalyzes the pyruvoyl-dependent decarboxylation of aspartate to produce beta-alanine. The protein is Aspartate 1-decarboxylase 1 of Polaromonas sp. (strain JS666 / ATCC BAA-500).